The sequence spans 328 residues: 2-hydroxyisoflavanone dehydratase (328 aa).

Positions 85–87 match the Involved in the stabilization of the negatively charged intermediate by the formation of the oxyanion hole motif; that stretch reads HGG. Catalysis depends on residues threonine 173, aspartate 272, and histidine 304.

This sequence belongs to the 'GDXG' lipolytic enzyme family.

The catalysed reaction is (2R,3S)-2,4',7-trihydroxyisoflavanone = daidzein + H2O + H(+). The enzyme catalyses 2-hydroxy-2,3-dihydrogenistein = genistein + H2O + H(+). It catalyses the reaction a carboxylic ester + H2O = an alcohol + a carboxylate + H(+). It participates in secondary metabolite biosynthesis; flavonoid biosynthesis. In terms of biological role, dehydratase that mediates the biosynthesis of isoflavonoids. Can better use 2,7-dihydroxy-4'-methoxyisoflavanone as substrate. Has also a slight carboxylesterase activity toward p-nitrophenyl butyrate. This Glycyrrhiza echinata (Licorice) protein is 2-hydroxyisoflavanone dehydratase (HIDM).